The chain runs to 589 residues: Cyclohexane-1,2-dione hydrolase (589 aa).

Glu-52 is a binding site for thiamine diphosphate. Residues 400 to 480 (NHTLPMFGGA…VITMVFTNES (81 aa)) are thiamine pyrophosphate binding. Mg(2+)-binding residues include Asp-451 and Asn-478.

The protein belongs to the TPP enzyme family. In terms of assembly, homodimer. The cofactor is Mg(2+). Thiamine diphosphate is required as a cofactor. FAD serves as cofactor.

It catalyses the reaction cyclohexan-1,2-dione + H2O = 6-oxohexanoate + H(+). Functionally, catalyzes the ring-opening cleavage of the alicyclic alcohol cyclohexane-1,2-dione. This chain is Cyclohexane-1,2-dione hydrolase, found in Azoarcus sp.